We begin with the raw amino-acid sequence, 358 residues long: DNA methyltransferase CcrM (358 aa).

The tract at residues methionine 1–aspartate 260 is methyltransferase. 2 consecutive DNA-binding regions (target strand DNA) follow at residues aspartate 31–tyrosine 34 and glycine 39–proline 45. DNA-binding regions (non-target strand DNA) lie at residues tyrosine 93–histidine 94 and tryptophan 109–isoleucine 110. Histidine 94 provides a ligand contact to dsDNA. The target strand DNA DNA-binding region spans methionine 122 to asparagine 132. The non-target strand DNA DNA-binding region spans tyrosine 153–lysine 157. Residues glutamine 164 and arginine 179 each coordinate dsDNA. Residues lysine 187–lysine 193 constitute a DNA-binding region (target strand DNA). One can recognise an RAMA domain in the interval glutamate 259–alanine 355. Positions leucine 261–glutamate 270 are linker. DsDNA is bound by residues lysine 267 and arginine 272. The segment at arginine 272–asparagine 358 is non-specific DNA-binding. DNA-binding regions (non-target strand DNA) lie at residues serine 315–histidine 317 and asparagine 330–tryptophan 332. Arginine 350 contacts dsDNA.

It belongs to the N(4)/N(6)-methyltransferase family. As to quaternary structure, homodimer. In terms of processing, rapidly degraded by Lon protease prior to cell division.

It catalyses the reaction a 2'-deoxyadenosine in DNA + S-adenosyl-L-methionine = an N(6)-methyl-2'-deoxyadenosine in DNA + S-adenosyl-L-homocysteine + H(+). Functionally, a beta subtype methylase that recognizes the double-stranded sequence 5'-GANTC-3' and methylates non-modifed A-2 on the hemimethylated, post-replicative DNA. Opens a bubble in the DNA at the recognition site, allowing precise recognition of the sequence and ensuring enzyme specificity. Functions only in the predivisional cell. Responsible for 5'-GANTC-3' methylation in the cell; methylation of hemimethylated sites generated after replication fork passage occurs late in the predivisional cell, near completion of chromosome replication but prior to cell division. Contributes to the accurate cell-cycle control of DNA replication and cellular morphology. This is DNA methyltransferase CcrM (ccrMIM) from Caulobacter vibrioides (strain ATCC 19089 / CIP 103742 / CB 15) (Caulobacter crescentus).